Reading from the N-terminus, the 299-residue chain is Coenzyme PQQ synthesis protein B (299 aa).

This sequence belongs to the PqqB family.

Its pathway is cofactor biosynthesis; pyrroloquinoline quinone biosynthesis. May be involved in the transport of PQQ or its precursor to the periplasm. In Xanthomonas axonopodis pv. citri (strain 306), this protein is Coenzyme PQQ synthesis protein B.